A 260-amino-acid polypeptide reads, in one-letter code: Cytosolic Fe-S cluster assembly factor Nubp2 homolog (260 aa).

14-21 (GKGGVGKS) serves as a coordination point for ATP. The [4Fe-4S] cluster site is built by Cys188 and Cys191.

Belongs to the Mrp/NBP35 ATP-binding proteins family. NUBP2/CFD1 subfamily. In terms of assembly, heterotetramer of 2 Nubp1 and 2 Nubp2 chains. [4Fe-4S] cluster is required as a cofactor.

It is found in the cytoplasm. In terms of biological role, component of the cytosolic iron-sulfur (Fe/S) protein assembly (CIA) machinery. Required for maturation of extramitochondrial Fe-S proteins. The Nubp1-Nubp2 heterotetramer forms a Fe-S scaffold complex, mediating the de novo assembly of an Fe-S cluster and its transfer to target apoproteins. The chain is Cytosolic Fe-S cluster assembly factor Nubp2 homolog from Drosophila sechellia (Fruit fly).